The primary structure comprises 149 residues: Protein E6 (149 aa).

2 zinc fingers span residues 30-66 (CVEC…CKLC) and 103-139 (CIIC…CAAC). Positions 147-149 (TAL) match the PDZ-binding domain motif.

It belongs to the papillomaviridae E6 protein family. As to quaternary structure, forms homodimers. Interacts with ubiquitin-protein ligase UBE3A/E6-AP and thus forms a complex with human TP53. Interacts with human NFX1 and MAGI3. Interacts with human IRF3; this interaction inhibits the establishment of antiviral state. Interacts with human TYK2; this interaction inhibits JAK-STAT activation by interferon alpha. Interacts with host DLG1; this interaction leads to the proteasomal degradation of DLG1.

It localises to the host cytoplasm. It is found in the host nucleus. In terms of biological role, this protein may be involved in the oncogenic potential of this virus (cervical neoplasia-associated virus). Its function is as follows. Plays a major role in the induction and maintenance of cellular transformation. Acts mainly as an oncoprotein by stimulating the destruction of many host cell key regulatory proteins. E6 associates with host UBE3A/E6-AP ubiquitin-protein ligase, and inactivates tumor suppressors TP53 and TP73 by targeting them to the 26S proteasome for degradation. In turn, DNA damage and chromosomal instabilities increase and lead to cell proliferation and cancer development. The complex E6/E6AP targets several other substrates to degradation via the proteasome including host DLG1 or NFX1, a repressor of human telomerase reverse transcriptase (hTERT). The resulting increased expression of hTERT prevents the shortening of telomere length leading to cell immortalization. Other cellular targets including BAK1, Fas-associated death domain-containing protein (FADD) and procaspase 8, are degraded by E6/E6AP causing inhibition of apoptosis. E6 also inhibits immune response by interacting with host IRF3 and TYK2. These interactions prevent IRF3 transcriptional activities and inhibit TYK2-mediated JAK-STAT activation by interferon alpha resulting in inhibition of the interferon signaling pathway. The chain is Protein E6 from Homo sapiens (Human).